The primary structure comprises 221 residues: Eukaryotic translation initiation factor NCBP (221 aa).

It belongs to the eukaryotic initiation factor 4E family. EIF4F is a multi-subunit complex, the composition of which varies with external and internal environmental conditions. It is composed of at least EIF4A, EIF4E and EIF4G. EIF4E is also known to interact with other partners. In higher plants two isoforms of EIF4F have been identified, named isoform EIF4F and isoform EIF(iso)4F. Isoform EIF4F has subunits p220 and p26, whereas isoform EIF(iso)4F has subunits p82 and p28.

Recognizes and binds the 7-methylguanosine-containing mRNA cap during an early step in the initiation of protein synthesis and facilitates ribosome binding by inducing the unwinding of the mRNAs secondary structures. The polypeptide is Eukaryotic translation initiation factor NCBP (NCBP) (Arabidopsis thaliana (Mouse-ear cress)).